The following is a 95-amino-acid chain: Small ribosomal subunit protein uS19 (95 aa).

It belongs to the universal ribosomal protein uS19 family.

Protein S19 forms a complex with S13 that binds strongly to the 16S ribosomal RNA. This chain is Small ribosomal subunit protein uS19, found in Thermosipho africanus (strain TCF52B).